Consider the following 243-residue polypeptide: Uba3-binding protein but1 (243 aa).

A disordered region spans residues 28-50; that stretch reads KSTKKRRSSTKDEETRGMHPHIK.

As to quaternary structure, homodimer. Interacts with but2 and uba3.

The protein localises to the nucleus. Its function is as follows. Acts as a negative regulator of the NEDD8 pathway. Has a role in meiosis. The protein is Uba3-binding protein but1 (but1) of Schizosaccharomyces pombe (strain 972 / ATCC 24843) (Fission yeast).